Here is a 116-residue protein sequence, read N- to C-terminus: Large ribosomal subunit protein bL17 (116 aa).

It belongs to the bacterial ribosomal protein bL17 family. Part of the 50S ribosomal subunit. Contacts protein L32.

The protein is Large ribosomal subunit protein bL17 of Synechococcus sp. (strain RCC307).